Consider the following 229-residue polypeptide: Cytidylate kinase (229 aa).

Position 12 to 20 (12 to 20 (GPSGTGKSS)) interacts with ATP.

It belongs to the cytidylate kinase family. Type 1 subfamily.

The protein localises to the cytoplasm. The catalysed reaction is CMP + ATP = CDP + ADP. It catalyses the reaction dCMP + ATP = dCDP + ADP. This is Cytidylate kinase from Rhodococcus jostii (strain RHA1).